Reading from the N-terminus, the 170-residue chain is Cathelicidin antimicrobial peptide (170 aa).

A signal peptide spans 1–30 (MKTQRDSPSLGRWSLVLLLLGLVMPLAIVA). Residues 31–131 (QVLSYQEAVL…DISCDKDNRR (101 aa)) constitute a propeptide, cathelin-like domain (CLD). 2 cysteine pairs are disulfide-bonded: cysteine 86/cysteine 97 and cysteine 108/cysteine 125. The tract at residues 150–162 (LKKVGQKIKDFLG) is active core.

This sequence belongs to the cathelicidin family. As to quaternary structure, monomer, homodimer or homotrimer (in vitro). Oligomerizes as tetra- or hexamer in solution (in vitro). Proteolytically cleaved by proteinase PRTN3 into antibacterial peptide LL-37. Proteolytically cleaved by cathepsin CTSG and neutrophil elastase ELANE. In terms of processing, resistant to proteolytic degradation in solution, and when bound to both zwitterionic (mimicking mammalian membranes) and negatively charged membranes (mimicking bacterial membranes). Post-translationally, after secretion onto the skin surface, the CAMP gene product is processed by a serine protease-dependent mechanism into multiple novel antimicrobial peptides distinct from and shorter than cathelicidin LL-37. These peptides show enhanced antimicrobial action, acquiring the ability to kill skin pathogens such as S.aureus, E.coli and C.albicans. These peptides have lost the ability to stimulate CXCL8/IL8 release from keratinocytes. The peptides act synergistically, killing bacteria at lower concentrations when present together, and maintain activity at increased salt condition.

It localises to the secreted. Its subcellular location is the vesicle. Antimicrobial protein that is an integral component of the innate immune system. Binds to bacterial lipopolysaccharides (LPS). Acts via neutrophil N-formyl peptide receptors to enhance the release of CXCL2. Postsecretory processing generates multiple cathelicidin antimicrobial peptides with various lengths which act as a topical antimicrobial defense in sweat on skin. The unprocessed precursor form, cathelicidin antimicrobial peptide, inhibits the growth of Gram-negative E.coli and E.aerogenes with efficiencies comparable to that of the mature peptide LL-37 (in vitro). Functionally, antimicrobial peptide that is an integral component of the innate immune system. Binds to bacterial lipopolysaccharides (LPS). Causes membrane permeabilization by forming transmembrane pores (in vitro). Causes lysis of E.coli. Exhibits antimicrobial activity against Gram-negative bacteria such as P.aeruginosa, S.typhimurium, E.aerogenes, E.coli and P.syringae, Gram-positive bacteria such as L.monocytogenes, S.epidermidis, S.pyogenes and S.aureus, as well as vancomycin-resistant enterococci (in vitro). Exhibits antimicrobial activity against methicillin-resistant S.aureus, P.mirabilis, and C.albicans in low-salt media, but not in media containing 100 mM NaCl (in vitro). Forms chiral supramolecular assemblies with quinolone signal (PQS) molecules of P.aeruginosa, which may lead to interference of bacterial quorum signaling and perturbance of bacterial biofilm formation. May form supramolecular fiber-like assemblies on bacterial membranes. Induces cytokine and chemokine producation as well as TNF/TNFA and CSF2/GMCSF production in normal human keratinocytes. Exhibits hemolytic activity against red blood cells. In terms of biological role, exhibits antimicrobial activity against E.coli and B.megaterium (in vitro). The protein is Cathelicidin antimicrobial peptide of Papio papio (Guinea baboon).